The sequence spans 316 residues: Thymidylate synthase (316 aa).

Residues arginine 23 and 178–179 (RR) each bind dUMP. The active-site Nucleophile is cysteine 198. Residues 218-221 (RSAD), asparagine 229, and 259-261 (HIY) each bind dUMP. (6R)-5,10-methylene-5,6,7,8-tetrahydrofolate is bound at residue aspartate 221. A (6R)-5,10-methylene-5,6,7,8-tetrahydrofolate-binding site is contributed by alanine 315.

The protein belongs to the thymidylate synthase family. Bacterial-type ThyA subfamily. Homodimer.

Its subcellular location is the cytoplasm. It catalyses the reaction dUMP + (6R)-5,10-methylene-5,6,7,8-tetrahydrofolate = 7,8-dihydrofolate + dTMP. The protein operates within pyrimidine metabolism; dTTP biosynthesis. Functionally, catalyzes the reductive methylation of 2'-deoxyuridine-5'-monophosphate (dUMP) to 2'-deoxythymidine-5'-monophosphate (dTMP) while utilizing 5,10-methylenetetrahydrofolate (mTHF) as the methyl donor and reductant in the reaction, yielding dihydrofolate (DHF) as a by-product. This enzymatic reaction provides an intracellular de novo source of dTMP, an essential precursor for DNA biosynthesis. The chain is Thymidylate synthase from Levilactobacillus brevis (strain ATCC 367 / BCRC 12310 / CIP 105137 / JCM 1170 / LMG 11437 / NCIMB 947 / NCTC 947) (Lactobacillus brevis).